The sequence spans 46 residues: Succinate dehydrogenase subunit 8, mitochondrial (46 aa).

In terms of assembly, component of complex II composed of eight subunits in plants: four classical SDH subunits SDH1, SDH2, SDH3 and SDH4 (a flavoprotein (FP), an iron-sulfur protein (IP), and a cytochrome b composed of a large and a small subunit.), as well as four subunits unknown in mitochondria from bacteria and heterotrophic eukaryotes.

The protein resides in the mitochondrion inner membrane. The protein operates within carbohydrate metabolism; tricarboxylic acid cycle. This chain is Succinate dehydrogenase subunit 8, mitochondrial, found in Arabidopsis thaliana (Mouse-ear cress).